The following is a 165-amino-acid chain: Phosphopantetheine adenylyltransferase (165 aa).

Ser9 provides a ligand contact to substrate. ATP is bound by residues 9 to 10 (SF) and His17. Residues Lys41, Leu73, and Lys87 each coordinate substrate. ATP-binding positions include 88–90 (GLR), Glu98, and 122–128 (YSFLSSS).

The protein belongs to the bacterial CoaD family. Homohexamer. Mg(2+) is required as a cofactor.

It localises to the cytoplasm. It catalyses the reaction (R)-4'-phosphopantetheine + ATP + H(+) = 3'-dephospho-CoA + diphosphate. It functions in the pathway cofactor biosynthesis; coenzyme A biosynthesis; CoA from (R)-pantothenate: step 4/5. Functionally, reversibly transfers an adenylyl group from ATP to 4'-phosphopantetheine, yielding dephospho-CoA (dPCoA) and pyrophosphate. The sequence is that of Phosphopantetheine adenylyltransferase from Acidothermus cellulolyticus (strain ATCC 43068 / DSM 8971 / 11B).